Here is an 837-residue protein sequence, read N- to C-terminus: Periplasmic nitrate reductase (837 aa).

Positions 1-33 form a signal peptide, tat-type signal; the sequence is MTTPKLDRRQVLKLEAAAMAALAGGIAMPAAAA. Positions 44-100 constitute a 4Fe-4S Mo/W bis-MGD-type domain; sequence LKWDKAACRFCGTGCSVMVATKENRVVATHGDTKSEVNRGLNCVKGYFLSKIMYGHD. 4 residues coordinate [4Fe-4S] cluster: Cys51, Cys54, Cys58, and Cys86. Residues Lys88, Gln155, Asn180, Cys184, 217–224, 248–252, 267–269, Met378, Gln382, Asn488, 514–515, Lys537, Asp564, and 724–733 contribute to the Mo-bis(molybdopterin guanine dinucleotide) site; these read WGSNMAEM, STFEH, QTD, SD, and TGRVLEHWHS. Residue Trp800 coordinates substrate. Asn808 and Lys825 together coordinate Mo-bis(molybdopterin guanine dinucleotide).

Belongs to the prokaryotic molybdopterin-containing oxidoreductase family. NasA/NapA/NarB subfamily. In terms of assembly, component of the periplasmic nitrate reductase NapAB complex composed of NapA and NapB. [4Fe-4S] cluster is required as a cofactor. Mo-bis(molybdopterin guanine dinucleotide) serves as cofactor. In terms of processing, predicted to be exported by the Tat system. The position of the signal peptide cleavage has not been experimentally proven.

It is found in the periplasm. It carries out the reaction 2 Fe(II)-[cytochrome] + nitrate + 2 H(+) = 2 Fe(III)-[cytochrome] + nitrite + H2O. Its function is as follows. Catalytic subunit of the periplasmic nitrate reductase complex NapAB. Receives electrons from NapB and catalyzes the reduction of nitrate to nitrite. The chain is Periplasmic nitrate reductase from Rhodopseudomonas palustris (strain BisB18).